Reading from the N-terminus, the 189-residue chain is Parkinson disease protein 7 homolog (189 aa).

The residue at position 2 (Ala-2) is an N-acetylalanine. Residues Cys-46 and Cys-53 are each lipidated (S-palmitoyl cysteine). The residue at position 67 (Tyr-67) is a Phosphotyrosine. Residue Cys-106 is the Nucleophile of the active site. Position 106 is a cysteine sulfinic acid (-SO2H); alternate (Cys-106). Residue Cys-106 is the site of S-palmitoyl cysteine; alternate attachment. Residue His-126 is part of the active site. Lys-130 is covalently cross-linked (Glycyl lysine isopeptide (Lys-Gly) (interchain with G-Cter in SUMO)). At Lys-148 the chain carries N6-acetyllysine. Lys-182 carries the N6-succinyllysine modification.

This sequence belongs to the peptidase C56 family. In terms of assembly, homodimer. Binds EFCAB6/DJBP and PIAS2. Part of a ternary complex containing PARK7, EFCAB6/DJBP and AR. Interacts (via N-terminus) with OTUD7B. Interacts with BBS1, HIPK1, CLCF1 and MTERF. Forms a complex with PINK1 and PRKN. Interacts (via C-terminus) with NCF1; the interaction is enhanced by LPS and modulates NCF1 phosphorylation and membrane translocation. Interacts with NENF. It depends on Deglycase activity does not require glutathione as a cofactor, however, glycated glutathione constitutes a PARK7 substrate. as a cofactor. Post-translationally, sumoylated on Lys-130 by PIAS2 or PIAS4; which is essential for cell-growth promoting activity and transforming activity. In terms of processing, undergoes cleavage of a C-terminal peptide and subsequent activation of protease activity in response to oxidative stress.

The protein resides in the cell membrane. Its subcellular location is the cytoplasm. It is found in the nucleus. The protein localises to the membrane raft. It localises to the mitochondrion. The protein resides in the endoplasmic reticulum. The catalysed reaction is N(omega)-(1-hydroxy-2-oxopropyl)-L-arginyl-[protein] + H2O = lactate + L-arginyl-[protein] + H(+). It carries out the reaction N(6)-(1-hydroxy-2-oxopropyl)-L-lysyl-[protein] + H2O = lactate + L-lysyl-[protein] + H(+). It catalyses the reaction S-(1-hydroxy-2-oxopropyl)-L-cysteinyl-[protein] + H2O = lactate + L-cysteinyl-[protein] + H(+). The enzyme catalyses N(omega)-(1-hydroxy-2-oxoethyl)-L-arginyl-[protein] + H2O = L-arginyl-[protein] + glycolate + H(+). The catalysed reaction is N(6)-(1-hydroxy-2-oxoethyl)-L-lysyl-[protein] + H2O = glycolate + L-lysyl-[protein] + H(+). It carries out the reaction S-(1-hydroxy-2-oxoethyl)-L-cysteinyl-[protein] + H2O = glycolate + L-cysteinyl-[protein] + H(+). It catalyses the reaction N(2)-(1-hydroxy-2-oxopropyl)-dGTP + H2O = lactate + dGTP + H(+). The enzyme catalyses N(2)-(1-hydroxy-2-oxopropyl)-GTP + H2O = lactate + GTP + H(+). The catalysed reaction is N(2)-(1-hydroxy-2-oxopropyl)-GDP + H2O = lactate + GDP + H(+). It carries out the reaction N(2)-(1-hydroxy-2-oxopropyl)-GMP + H2O = lactate + GMP + H(+). It catalyses the reaction N(2)-(1-hydroxy-2-oxoethyl)-dGTP + H2O = dGTP + glycolate + H(+). The enzyme catalyses N(2)-(1-hydroxy-2-oxoethyl)-GTP + H2O = glycolate + GTP + H(+). The catalysed reaction is N(2)-(1-hydroxy-2-oxoethyl)-GDP + H2O = glycolate + GDP + H(+). It carries out the reaction N(2)-(1-hydroxy-2-oxoethyl)-GMP + H2O = glycolate + GMP + H(+). It catalyses the reaction an N(2)-(1-hydroxy-2-oxopropyl)-guanosine in RNA + H2O = a guanosine in RNA + lactate + H(+). The enzyme catalyses an N(2)-(1-hydroxy-2-oxopropyl)-2'-deoxyguanosine in DNA + H2O = a 2'-deoxyguanosine in DNA + lactate + H(+). The catalysed reaction is an N(2)-(1-hydroxy-2-oxoethyl)-guanosine in RNA + H2O = a guanosine in RNA + glycolate + H(+). It carries out the reaction an N(2)-(1-hydroxy-2-oxoethyl)-2'-deoxyguanosine in DNA + H2O = a 2'-deoxyguanosine in DNA + glycolate + H(+). Multifunctional protein with controversial molecular function which plays an important role in cell protection against oxidative stress and cell death acting as oxidative stress sensor and redox-sensitive chaperone and protease. It is involved in neuroprotective mechanisms like the stabilization of NFE2L2 and PINK1 proteins, male fertility as a positive regulator of androgen signaling pathway as well as cell growth and transformation through, for instance, the modulation of NF-kappa-B signaling pathway. Has been described as a protein and nucleotide deglycase that catalyzes the deglycation of the Maillard adducts formed between amino groups of proteins or nucleotides and reactive carbonyl groups of glyoxals. But this function is rebuted by other works. As a protein deglycase, repairs methylglyoxal- and glyoxal-glycated proteins, and releases repaired proteins and lactate or glycolate, respectively. Deglycates cysteine, arginine and lysine residues in proteins, and thus reactivates these proteins by reversing glycation by glyoxals. Acts on early glycation intermediates (hemithioacetals and aminocarbinols), preventing the formation of advanced glycation endproducts (AGE) that cause irreversible damage. Also functions as a nucleotide deglycase able to repair glycated guanine in the free nucleotide pool (GTP, GDP, GMP, dGTP) and in DNA and RNA. Is thus involved in a major nucleotide repair system named guanine glycation repair (GG repair), dedicated to reversing methylglyoxal and glyoxal damage via nucleotide sanitization and direct nucleic acid repair. Protects histones from adduction by methylglyoxal, controls the levels of methylglyoxal-derived argininine modifications on chromatin. Able to remove the glycations and restore histone 3, histone glycation disrupts both local and global chromatin architecture by altering histone-DNA interactions as well as histone acetylation and ubiquitination levels. Displays a very low glyoxalase activity that may reflect its deglycase activity. Eliminates hydrogen peroxide and protects cells against hydrogen peroxide-induced cell death. Required for correct mitochondrial morphology and function as well as for autophagy of dysfunctional mitochondria. Plays a role in regulating expression or stability of the mitochondrial uncoupling proteins SLC25A14 and SLC25A27 in dopaminergic neurons of the substantia nigra pars compacta and attenuates the oxidative stress induced by calcium entry into the neurons via L-type channels during pacemaking. Regulates astrocyte inflammatory responses, may modulate lipid rafts-dependent endocytosis in astrocytes and neuronal cells. In pancreatic islets, involved in the maintenance of mitochondrial reactive oxygen species (ROS) levels and glucose homeostasis in an age- and diet dependent manner. Protects pancreatic beta cells from cell death induced by inflammatory and cytotoxic setting. Binds to a number of mRNAs containing multiple copies of GG or CC motifs and partially inhibits their translation but dissociates following oxidative stress. Metal-binding protein able to bind copper as well as toxic mercury ions, enhances the cell protection mechanism against induced metal toxicity. In macrophages, interacts with the NADPH oxidase subunit NCF1 to direct NADPH oxidase-dependent ROS production, and protects against sepsis. This chain is Parkinson disease protein 7 homolog, found in Chlorocebus aethiops (Green monkey).